Consider the following 418-residue polypeptide: Histidine--tRNA ligase (418 aa).

This sequence belongs to the class-II aminoacyl-tRNA synthetase family. As to quaternary structure, homodimer.

Its subcellular location is the cytoplasm. The catalysed reaction is tRNA(His) + L-histidine + ATP = L-histidyl-tRNA(His) + AMP + diphosphate + H(+). The protein is Histidine--tRNA ligase of Dehalococcoides mccartyi (strain ATCC BAA-2100 / JCM 16839 / KCTC 5957 / BAV1).